The following is a 73-amino-acid chain: Homeodomain-only protein (73 aa).

The segment at residues 3–62 (AQTASGPTEDQVEILEYNFNKVNKHPDPTTLCLIAAEAGLTEEQTQKWFKQRLAEWRRSE) is a DNA-binding region (homeobox; degenerate).

As to quaternary structure, interacts with serum response factor (SRF). Component of a large complex containing histone deacetylases such as HDAC2. Interacts with the acetylated forms of HSPA1A and HSPA1B. Interacts with HSPA8. As to expression, expressed in the embryonic and adult heart and in the adult brain, liver, lung, skeletal muscle, intestine and spleen. Throughout embryonic and postnatal development, it is expressed in the myocardium.

It localises to the nucleus. Its subcellular location is the cytoplasm. Its function is as follows. Atypical homeodomain protein which does not bind DNA and is required to modulate cardiac growth and development. Acts via its interaction with SRF, thereby modulating the expression of SRF-dependent cardiac-specific genes and cardiac development. Prevents SRF-dependent transcription either by inhibiting SRF binding to DNA or by recruiting histone deacetylase (HDAC) proteins that prevent transcription by SRF. Overexpression causes cardiac hypertrophy. Acts as a co-chaperone for HSPA1A and HSPA1B chaperone proteins and assists in chaperone-mediated protein refolding. The chain is Homeodomain-only protein (Hopx) from Mus musculus (Mouse).